Consider the following 691-residue polypeptide: Elongation factor G (691 aa).

The tr-type G domain maps to 8 to 283; the sequence is EDYRNFGIMA…AVVDYLPSPI (276 aa). Residues 17–24, 81–85, and 135–138 contribute to the GTP site; these read AHIDAGKT, DTPGH, and NKMD.

The protein belongs to the TRAFAC class translation factor GTPase superfamily. Classic translation factor GTPase family. EF-G/EF-2 subfamily.

Its subcellular location is the cytoplasm. Functionally, catalyzes the GTP-dependent ribosomal translocation step during translation elongation. During this step, the ribosome changes from the pre-translocational (PRE) to the post-translocational (POST) state as the newly formed A-site-bound peptidyl-tRNA and P-site-bound deacylated tRNA move to the P and E sites, respectively. Catalyzes the coordinated movement of the two tRNA molecules, the mRNA and conformational changes in the ribosome. This chain is Elongation factor G, found in Methylocella silvestris (strain DSM 15510 / CIP 108128 / LMG 27833 / NCIMB 13906 / BL2).